The chain runs to 105 residues: Nucleoid-associated protein MW0434 (105 aa).

The segment at 1–33 (MRGGGNMQQMMKQMQKMQKKMAQEQEKLKEERI) is disordered. Low complexity predominate over residues 7 to 16 (MQQMMKQMQK). Residues 21 to 33 (MAQEQEKLKEERI) show a composition bias toward basic and acidic residues.

It belongs to the YbaB/EbfC family. In terms of assembly, homodimer.

The protein localises to the cytoplasm. Its subcellular location is the nucleoid. Its function is as follows. Binds to DNA and alters its conformation. May be involved in regulation of gene expression, nucleoid organization and DNA protection. This is Nucleoid-associated protein MW0434 from Staphylococcus aureus (strain MW2).